The sequence spans 436 residues: AMSH-like protease (436 aa).

Met1 is modified (N-acetylmethionine). Phosphoserine occurs at positions 25 and 242. The region spanning 269–397 (VVLSRDLCHK…IFRLTNAGML (129 aa)) is the MPN domain. His347, His349, Asp360, His362, Cys402, His408, and His410 together coordinate Zn(2+). The short motif at 347–360 (HTHPTQTAFLSSVD) is the JAMM motif element.

Belongs to the peptidase M67C family. It depends on Zn(2+) as a cofactor. Ubiquitously expressed. Isoform 1 is widely expressed while isoform 2 is testis-specific.

Functionally, zinc metalloprotease that specifically cleaves 'Lys-63'-linked polyubiquitin chains. Acts as a positive regulator of the TORC1 signaling pathway by mediating 'Lys-63'-linked deubiquitination of SESN2, thereby inhibiting SESN2-interaction with the GATOR2 complex. Does not cleave 'Lys-48'-linked polyubiquitin chains. The chain is AMSH-like protease (Stambpl1) from Mus musculus (Mouse).